We begin with the raw amino-acid sequence, 297 residues long: Phosphatidylserine decarboxylase proenzyme (297 aa).

Residues D112, H168, and S255 each act as charge relay system; for autoendoproteolytic cleavage activity in the active site. S255 functions as the Schiff-base intermediate with substrate; via pyruvic acid; for decarboxylase activity in the catalytic mechanism. Position 255 is a pyruvic acid (Ser); by autocatalysis (S255).

Belongs to the phosphatidylserine decarboxylase family. PSD-B subfamily. Prokaryotic type II sub-subfamily. Heterodimer of a large membrane-associated beta subunit and a small pyruvoyl-containing alpha subunit. The cofactor is pyruvate. Post-translationally, is synthesized initially as an inactive proenzyme. Formation of the active enzyme involves a self-maturation process in which the active site pyruvoyl group is generated from an internal serine residue via an autocatalytic post-translational modification. Two non-identical subunits are generated from the proenzyme in this reaction, and the pyruvate is formed at the N-terminus of the alpha chain, which is derived from the carboxyl end of the proenzyme. The autoendoproteolytic cleavage occurs by a canonical serine protease mechanism, in which the side chain hydroxyl group of the serine supplies its oxygen atom to form the C-terminus of the beta chain, while the remainder of the serine residue undergoes an oxidative deamination to produce ammonia and the pyruvoyl prosthetic group on the alpha chain. During this reaction, the Ser that is part of the protease active site of the proenzyme becomes the pyruvoyl prosthetic group, which constitutes an essential element of the active site of the mature decarboxylase.

It is found in the cell membrane. The catalysed reaction is a 1,2-diacyl-sn-glycero-3-phospho-L-serine + H(+) = a 1,2-diacyl-sn-glycero-3-phosphoethanolamine + CO2. The protein operates within phospholipid metabolism; phosphatidylethanolamine biosynthesis; phosphatidylethanolamine from CDP-diacylglycerol: step 2/2. Catalyzes the formation of phosphatidylethanolamine (PtdEtn) from phosphatidylserine (PtdSer). The chain is Phosphatidylserine decarboxylase proenzyme from Clostridium tetani (strain Massachusetts / E88).